Reading from the N-terminus, the 122-residue chain is Large ribosomal subunit protein uL14 (122 aa).

It belongs to the universal ribosomal protein uL14 family. As to quaternary structure, part of the 50S ribosomal subunit. Forms a cluster with proteins L3 and L19. In the 70S ribosome, L14 and L19 interact and together make contacts with the 16S rRNA in bridges B5 and B8.

Its function is as follows. Binds to 23S rRNA. Forms part of two intersubunit bridges in the 70S ribosome. The sequence is that of Large ribosomal subunit protein uL14 from Mycolicibacterium vanbaalenii (strain DSM 7251 / JCM 13017 / BCRC 16820 / KCTC 9966 / NRRL B-24157 / PYR-1) (Mycobacterium vanbaalenii).